The following is a 475-amino-acid chain: Ribulose bisphosphate carboxylase large chain (475 aa).

Positions 1–2 (MS) are excised as a propeptide. Proline 3 carries the post-translational modification N-acetylproline. N6,N6,N6-trimethyllysine is present on lysine 14. The substrate site is built by asparagine 123 and threonine 173. The Proton acceptor role is filled by lysine 175. Position 177 (lysine 177) interacts with substrate. Mg(2+) is bound by residues lysine 201, aspartate 203, and glutamate 204. N6-carboxylysine is present on lysine 201. The Proton acceptor role is filled by histidine 294. Residues arginine 295, histidine 327, and serine 379 each coordinate substrate.

Belongs to the RuBisCO large chain family. Type I subfamily. Heterohexadecamer of 8 large chains and 8 small chains. The cofactor is Mg(2+).

The protein localises to the plastid. The protein resides in the chloroplast. The enzyme catalyses 2 (2R)-3-phosphoglycerate + 2 H(+) = D-ribulose 1,5-bisphosphate + CO2 + H2O. It carries out the reaction D-ribulose 1,5-bisphosphate + O2 = 2-phosphoglycolate + (2R)-3-phosphoglycerate + 2 H(+). In terms of biological role, ruBisCO catalyzes two reactions: the carboxylation of D-ribulose 1,5-bisphosphate, the primary event in carbon dioxide fixation, as well as the oxidative fragmentation of the pentose substrate in the photorespiration process. Both reactions occur simultaneously and in competition at the same active site. The polypeptide is Ribulose bisphosphate carboxylase large chain (Coleochaete orbicularis (Charophycean green alga)).